The primary structure comprises 173 residues: uncharacterized protein (173 aa).

3 helical membrane-spanning segments follow: residues 24 to 44 (VAFI…WLFF), 82 to 102 (YILF…SYFI), and 135 to 155 (LIKR…ILFS).

It is found in the cell membrane. This is an uncharacterized protein from Rickettsia prowazekii (strain Madrid E).